The following is a 262-amino-acid chain: Ribosome-recycling factor, mitochondrial (262 aa).

Residues 1 to 55 (MASGIRCFRLLHPAFRSYHAALTRPVSEVSMKTVSGRQHGHRQYSAYPAVPVRHF) constitute a mitochondrion transit peptide.

This sequence belongs to the RRF family.

Its subcellular location is the mitochondrion. Functionally, responsible for the disassembly of ribosomes from messenger RNA at the termination of mitochondrial protein biosynthesis. Acts in collaboration with GFM2. Promotes mitochondrial ribosome recycling by dissolution of intersubunit contacts. The sequence is that of Ribosome-recycling factor, mitochondrial (Mrrf) from Mus musculus (Mouse).